Consider the following 208-residue polypeptide: Thymidylate kinase (208 aa).

11–18 (GGEGAGKS) is an ATP binding site.

The protein belongs to the thymidylate kinase family.

It catalyses the reaction dTMP + ATP = dTDP + ADP. Functionally, phosphorylation of dTMP to form dTDP in both de novo and salvage pathways of dTTP synthesis. The protein is Thymidylate kinase (tmk) of Caulobacter vibrioides (strain ATCC 19089 / CIP 103742 / CB 15) (Caulobacter crescentus).